The primary structure comprises 933 residues: Thyroid peroxidase (933 aa).

Positions 1-18 (MRALAVLSVTLVMACTEA) are cleaved as a signal peptide. Residues 19-846 (FFPFISRGKE…TCVDSGRLPR (828 aa)) are Extracellular-facing. A glycan (N-linked (GlcNAc...) asparagine) is linked at N129. The cysteines at positions 142 and 158 are disulfide-linked. D238 provides a ligand contact to heme b. The active-site Proton acceptor is the H239. D240 is a binding site for Ca(2+). Intrachain disulfides connect C259-C269 and C263-C286. A glycan (N-linked (GlcNAc...) asparagine) is linked at N307. Positions 321, 323, 325, and 327 each coordinate Ca(2+). N342 is a glycosylation site (N-linked (GlcNAc...) asparagine). E399 and H494 together coordinate heme b. An N-linked (GlcNAc...) asparagine glycan is attached at N569. 2 disulfide bridges follow: C598–C655 and C696–C721. In terms of domain architecture, Sushi spans 740 to 795 (DKCGFPESVENGDFVHCEESGRRVLVYSCRHGYELQGREQLTCTQEGWDFQPPLCK). Positions 796-839 (DVNECADGAHPPCHASARCRNTKGGFQCLCADPYELGDDGRTCV) constitute an EGF-like; calcium-binding domain. 3 cysteine pairs are disulfide-bonded: C800-C814, C808-C823, and C825-C838. The chain crosses the membrane as a helical span at residues 847 to 871 (VTWISMSLAALLIGGFAGLTSTVIC). Topologically, residues 872 to 933 (RWTRTGTKST…RDTHRLPRAL (62 aa)) are cytoplasmic. Residues 881–933 (TLPISETGGGTPELRCGKHQAVGTSPQRAAAQDSEQESAGMEGRDTHRLPRAL) form a disordered region. Residues 922–933 (EGRDTHRLPRAL) show a composition bias toward basic and acidic residues.

This sequence belongs to the peroxidase family. XPO subfamily. Interacts with DUOX1, DUOX2 and CYBA. Requires Ca(2+) as cofactor. Heme b is required as a cofactor. Glycosylated. In terms of processing, heme is covalently bound through a H(2)O(2)-dependent autocatalytic process. Heme insertion is important for the delivery of protein at the cell surface. Post-translationally, cleaved in its N-terminal part.

Its subcellular location is the membrane. The protein localises to the cell surface. It catalyses the reaction 2 iodide + H2O2 + 2 H(+) = diiodine + 2 H2O. It carries out the reaction [thyroglobulin]-L-tyrosine + iodide + H2O2 + H(+) = [thyroglobulin]-3-iodo-L-tyrosine + 2 H2O. The enzyme catalyses [thyroglobulin]-3-iodo-L-tyrosine + iodide + H2O2 + H(+) = [thyroglobulin]-3,5-diiodo-L-tyrosine + 2 H2O. The catalysed reaction is 2 [thyroglobulin]-3,5-diiodo-L-tyrosine + H2O2 = [thyroglobulin]-L-thyroxine + [thyroglobulin]-dehydroalanine + 2 H2O. It catalyses the reaction [thyroglobulin]-3-iodo-L-tyrosine + [thyroglobulin]-3,5-diiodo-L-tyrosine + H2O2 = [thyroglobulin]-3,3',5-triiodo-L-thyronine + [thyroglobulin]-dehydroalanine + 2 H2O. Its pathway is hormone biosynthesis; thyroid hormone biosynthesis. In terms of biological role, iodination and coupling of the hormonogenic tyrosines in thyroglobulin to yield the thyroid hormones T(3) and T(4). The polypeptide is Thyroid peroxidase (Homo sapiens (Human)).